The following is a 144-amino-acid chain: Large ribosomal subunit protein uL13 (144 aa).

This sequence belongs to the universal ribosomal protein uL13 family. In terms of assembly, part of the 50S ribosomal subunit.

This protein is one of the early assembly proteins of the 50S ribosomal subunit, although it is not seen to bind rRNA by itself. It is important during the early stages of 50S assembly. This chain is Large ribosomal subunit protein uL13, found in Mesomycoplasma hyopneumoniae (strain 232) (Mycoplasma hyopneumoniae).